Reading from the N-terminus, the 384-residue chain is Transcription factor iacI (384 aa).

The protein resides in the nucleus. Its function is as follows. Transcription factor; part of the gene cluster that mediates the biosynthesis of iso-A82775C, a enylepoxycyclohexane and biosynthetic precursor of the chloropestolide anticancer natural products. The sequence is that of Transcription factor iacI from Pestalotiopsis fici (strain W106-1 / CGMCC3.15140).